The following is a 291-amino-acid chain: B3 domain-containing protein At2g16210 (291 aa).

The TF-B3 1 DNA-binding region spans 19–114 (FFKVVQSINV…HFTVNIFKLD (96 aa)). The span at 149–159 (VSSNRGQTTAA) shows a compositional bias: polar residues. Positions 149–182 (VSSNRGQTTAAESKGRKLNLGKRAAKESQSSKRT) are disordered. Positions 172-182 (AAKESQSSKRT) are enriched in basic and acidic residues. The TF-B3 2 DNA-binding region spans 200-291 (AAAFTILFKQ…KELLLVVSKP (92 aa)).

The protein localises to the nucleus. This is B3 domain-containing protein At2g16210 from Arabidopsis thaliana (Mouse-ear cress).